We begin with the raw amino-acid sequence, 805 residues long: FAD-dependent monooxygenase verC1 (805 aa).

Positions 1-20 (MTFRVIIVGGGVAGLTLASA) are cleaved as a signal peptide. Residues Glu32, Ala46, and Arg107 each coordinate FAD. An N-linked (GlcNAc...) asparagine glycan is attached at Asn132. Residue Tyr214 is part of the active site. FAD-binding residues include Asp306 and Ala319. Helical transmembrane passes span 551–571 (ALTM…AGLG), 604–624 (IAVL…AFFW), 632–652 (SWLF…YLFS), 671–691 (LPVI…FWMW), 703–723 (VFFP…VCAI), 726–746 (WDML…IWDL), and 761–781 (IYGV…LGWL).

This sequence belongs to the paxM FAD-dependent monooxygenase family.

Its subcellular location is the membrane. It functions in the pathway secondary metabolite biosynthesis; terpenoid biosynthesis. The protein operates within mycotoxin biosynthesis. Its function is as follows. FAD-dependent monooxygenase; part of the gene cluster that mediates the biosynthesis of the neurotoxin verrucosidin, a methylated alpha-pyrone polyketide that inhibits oxidative phosphorylation in mitochondria and thereby causes neurological diseases. The carbon backbone of verrucosidin is synthesized by the HR-PKS verA, and further modified by the other verrucodidin cluster enzymes. The polypeptide is FAD-dependent monooxygenase verC1 (Penicillium polonicum).